The sequence spans 161 residues: Endoribonuclease YbeY (161 aa).

Residues His121, His125, and His131 each coordinate Zn(2+).

It belongs to the endoribonuclease YbeY family. Zn(2+) is required as a cofactor.

The protein localises to the cytoplasm. Its function is as follows. Single strand-specific metallo-endoribonuclease involved in late-stage 70S ribosome quality control and in maturation of the 3' terminus of the 16S rRNA. The protein is Endoribonuclease YbeY of Stenotrophomonas maltophilia (strain K279a).